Reading from the N-terminus, the 106-residue chain is Antitoxin MazE3 (106 aa).

Forms a complex with cognate toxin MazF3, possibly with 1:1 stoichiometry.

Antitoxin component of a type II toxin-antitoxin (TA) system. Upon expression in E.coli and M.smegmatis neutralizes the effect of cognate toxin MazF3. Overexpression of MazE3 alone decreased persister cells formation in M.smegmatis upon challenge with gentamicin or kanamycin. This Mycobacterium tuberculosis (strain ATCC 25618 / H37Rv) protein is Antitoxin MazE3 (mazE3).